Reading from the N-terminus, the 330-residue chain is Putative heme-binding peroxidase (330 aa).

The active-site Proton acceptor is the His38. His162 contacts heme b. Trp178 serves as the catalytic Tryptophan radical intermediate. The segment at 286-330 is disordered; that stretch reads GEYKSAPQKSPVPGAPGAGKDGEANPLARQNERAHGQAQHALAKL.

This sequence belongs to the peroxidase family. Cytochrome c peroxidase subfamily. Requires heme b as cofactor.

Destroys radicals which are normally produced within the cells and which are toxic to biological systems. The chain is Putative heme-binding peroxidase (CCP2) from Mycosarcoma maydis (Corn smut fungus).